A 213-amino-acid chain; its full sequence is Pyrrolidone-carboxylate peptidase (213 aa).

Residues Glu-81, Cys-144, and His-166 contribute to the active site.

The protein belongs to the peptidase C15 family. Homodimer.

It is found in the cytoplasm. It catalyses the reaction Release of an N-terminal pyroglutamyl group from a polypeptide, the second amino acid generally not being Pro.. Removes 5-oxoproline from various penultimate amino acid residues except L-proline. The protein is Pyrrolidone-carboxylate peptidase (pcp) of Pseudomonas fluorescens.